Here is a 580-residue protein sequence, read N- to C-terminus: TRAF-type zinc finger domain-containing protein 1 (580 aa).

Position 2 is an N-acetylalanine (A2). The segment at 27 to 103 (IHEIHCQRNI…DLELSVVKLK (77 aa)) adopts a TRAF-type zinc-finger fold. Phosphoserine is present on residues S278, S320, S326, S327, S409, S415, S430, S450, S469, and S532. Disordered regions lie at residues 395-453 (TANH…SPNR), 468-509 (PSGP…ASGH), and 524-580 (FAPS…EEEE). Residues 407 to 417 (QDSQPENTSAE) show a composition bias toward polar residues.

As to quaternary structure, interacts with MAVS, TICAM1, TRAF1, TRAF2, TRAF3 and TRAF6. Expressed in skeletal muscle, brain, liver, kidney, spleen and bone marrow. Expression depends on STAT1.

In terms of biological role, negative feedback regulator that controls excessive innate immune responses. Regulates both Toll-like receptor 4 (TLR4) and DDX58/RIG1-like helicases (RLH) pathways. May inhibit the LTR pathway by direct interaction with TRAF6 and attenuation of NF-kappa-B activation. May negatively regulate the RLH pathway downstream from MAVS and upstream of NF-kappa-B and IRF3. This chain is TRAF-type zinc finger domain-containing protein 1 (Trafd1), found in Mus musculus (Mouse).